The sequence spans 365 residues: uncharacterized protein (365 aa).

Transmembrane regions (helical) follow at residues 3–23 (MDTS…LYSI), 60–80 (IGII…LNII), 100–120 (VFLF…LIAI), 141–161 (SGIL…GDEF), 171–191 (AIAS…IPLL), and 280–300 (TALF…LALF).

This sequence to S.solfataricus C04034.

It is found in the cell membrane. This is an uncharacterized protein from Methanocaldococcus jannaschii (strain ATCC 43067 / DSM 2661 / JAL-1 / JCM 10045 / NBRC 100440) (Methanococcus jannaschii).